A 271-amino-acid polypeptide reads, in one-letter code: MTAWILLPVSLSAFSITGIWTVYAMAVMNRHVCPVENWSYNESCSPDPAEQGGPKSCCTLDDVPLISKCGTYPPESCLFSLIGNMGAVMVALICLLRYGQLLEQSRHSWINTTALITGCTNAAGLVVVGNFQVDHAKSLHYIGTGVAFTAGLLFVCLHCVLFYHGATTPLDMAMAYLRSVLAVIAFITLVLSGVFFLHESSQLQHGAALCEWVFVLDILIFYGTFSYEFGTISSDTLVAALQPAPGRACKSSGSSSTSTHLNCAPESIAMI.

At 1-2 (MT) the chain is on the cytoplasmic side. A helical membrane pass occupies residues 3 to 23 (AWILLPVSLSAFSITGIWTVY). Topologically, residues 24–75 (AMAVMNRHVCPVENWSYNESCSPDPAEQGGPKSCCTLDDVPLISKCGTYPPE) are extracellular. N37 and N41 each carry an N-linked (GlcNAc...) asparagine glycan. Residues 76–96 (SCLFSLIGNMGAVMVALICLL) traverse the membrane as a helical segment. Over 97–108 (RYGQLLEQSRHS) the chain is Cytoplasmic. Residues 109 to 129 (WINTTALITGCTNAAGLVVVG) traverse the membrane as a helical segment. At 130 to 140 (NFQVDHAKSLH) the chain is on the extracellular side. Residues 141–161 (YIGTGVAFTAGLLFVCLHCVL) form a helical membrane-spanning segment. Over 162–178 (FYHGATTPLDMAMAYLR) the chain is Cytoplasmic. The helical transmembrane segment at 179–199 (SVLAVIAFITLVLSGVFFLHE) threads the bilayer. The Extracellular segment spans residues 200 to 211 (SSQLQHGAALCE). The chain crosses the membrane as a helical span at residues 212-232 (WVFVLDILIFYGTFSYEFGTI). The Cytoplasmic portion of the chain corresponds to 233–271 (SSDTLVAALQPAPGRACKSSGSSSTSTHLNCAPESIAMI).

This sequence belongs to the DRAM/TMEM150 family. Interacts (via C-terminal cytoplasmic tail) with PI4KA.

Its subcellular location is the cell membrane. Its function is as follows. Regulates localization of phosphatidylinositol 4-kinase (PI4K) to the plasma membrane, possibly by reducing the association of TTC7 (TTC7A or TTC7B) with the PI4K complex. Acts as a regulator of phosphatidylinositol 4-phosphate (PtdIns(4)P) synthesis. May also play a role in fasting-induced catabolism. This Mus musculus (Mouse) protein is Transmembrane protein 150A (Tmem150a).